Consider the following 443-residue polypeptide: Serine--tRNA ligase (443 aa).

250–252 (TSE) is an L-serine binding site. 281–283 (RSE) contacts ATP. Residue E304 participates in L-serine binding. 368-371 (EISS) is an ATP binding site. S403 lines the L-serine pocket.

It belongs to the class-II aminoacyl-tRNA synthetase family. Type-1 seryl-tRNA synthetase subfamily. In terms of assembly, homodimer. The tRNA molecule binds across the dimer.

The protein resides in the cytoplasm. The catalysed reaction is tRNA(Ser) + L-serine + ATP = L-seryl-tRNA(Ser) + AMP + diphosphate + H(+). It carries out the reaction tRNA(Sec) + L-serine + ATP = L-seryl-tRNA(Sec) + AMP + diphosphate + H(+). It participates in aminoacyl-tRNA biosynthesis; selenocysteinyl-tRNA(Sec) biosynthesis; L-seryl-tRNA(Sec) from L-serine and tRNA(Sec): step 1/1. Its function is as follows. Catalyzes the attachment of serine to tRNA(Ser). Is also able to aminoacylate tRNA(Sec) with serine, to form the misacylated tRNA L-seryl-tRNA(Sec), which will be further converted into selenocysteinyl-tRNA(Sec). The protein is Serine--tRNA ligase of Variovorax paradoxus (strain S110).